A 396-amino-acid polypeptide reads, in one-letter code: NADH-quinone oxidoreductase subunit D (396 aa).

Belongs to the complex I 49 kDa subunit family. As to quaternary structure, NDH-1 is composed of 14 different subunits. Subunits NuoB, C, D, E, F, and G constitute the peripheral sector of the complex.

Its subcellular location is the cell inner membrane. The enzyme catalyses a quinone + NADH + 5 H(+)(in) = a quinol + NAD(+) + 4 H(+)(out). Functionally, NDH-1 shuttles electrons from NADH, via FMN and iron-sulfur (Fe-S) centers, to quinones in the respiratory chain. The immediate electron acceptor for the enzyme in this species is believed to be ubiquinone. Couples the redox reaction to proton translocation (for every two electrons transferred, four hydrogen ions are translocated across the cytoplasmic membrane), and thus conserves the redox energy in a proton gradient. The chain is NADH-quinone oxidoreductase subunit D from Agrobacterium fabrum (strain C58 / ATCC 33970) (Agrobacterium tumefaciens (strain C58)).